The primary structure comprises 255 residues: tRNA pseudouridine synthase A (255 aa).

The active-site Nucleophile is aspartate 52. A substrate-binding site is contributed by tyrosine 111.

This sequence belongs to the tRNA pseudouridine synthase TruA family. In terms of assembly, homodimer.

It catalyses the reaction uridine(38/39/40) in tRNA = pseudouridine(38/39/40) in tRNA. Formation of pseudouridine at positions 38, 39 and 40 in the anticodon stem and loop of transfer RNAs. The polypeptide is tRNA pseudouridine synthase A (Cereibacter sphaeroides (strain ATCC 17023 / DSM 158 / JCM 6121 / CCUG 31486 / LMG 2827 / NBRC 12203 / NCIMB 8253 / ATH 2.4.1.) (Rhodobacter sphaeroides)).